Consider the following 819-residue polypeptide: Phenylalanine--tRNA ligase beta subunit (819 aa).

The region spanning 42-154 (RGGLRGLVIG…SDAPVGMPAA (113 aa)) is the tRNA-binding domain. Residues 412–488 (LKPHLISLSF…RIYGYNQVEL (77 aa)) enclose the B5 domain. Mg(2+)-binding residues include Asp-466, Asp-472, Glu-475, and Glu-476. Residues 726 to 819 (PRFPEVKRDL…LEQKLGAQLR (94 aa)) form the FDX-ACB domain.

The protein belongs to the phenylalanyl-tRNA synthetase beta subunit family. Type 1 subfamily. As to quaternary structure, tetramer of two alpha and two beta subunits. It depends on Mg(2+) as a cofactor.

Its subcellular location is the cytoplasm. It carries out the reaction tRNA(Phe) + L-phenylalanine + ATP = L-phenylalanyl-tRNA(Phe) + AMP + diphosphate + H(+). In Porphyromonas gingivalis (strain ATCC BAA-308 / W83), this protein is Phenylalanine--tRNA ligase beta subunit.